The chain runs to 627 residues: Anti-CBASS protein Acb1 (627 aa).

Tyrosine 105 lines the 3',3'-cGAMP pocket. Tyrosine 105 is a 3',3'-cUAMP binding site. The segment at 437-474 (LADQPETESANENTEQPESGEEGEEGQPTRRAANDAKP) is disordered. Residues histidine 508, threonine 510, histidine 584, and threonine 586 contribute to the active site. 3',3'-cGAMP contacts are provided by glutamate 614 and tryptophan 620. The 3',3'-cUAMP site is built by glutamate 614 and tryptophan 620.

The protein belongs to the anti-CBASS protein Acb1 family.

It carries out the reaction 3',3'-cUAMP + H2O = U[3'-5']pAp[3'] + H(+). The enzyme catalyses 3',3',3'-c-tri-AMP + H2O = A[3'-5']pA[3'-5']pAp[3'] + H(+). The catalysed reaction is 3',3',3'-cAAG + H2O = G[3'-5']pA[3'-5']pAp[3'] + H(+). It catalyses the reaction 3',3',3'-cAAG + H2O = A[3'-5']pG[3'-5']pAp[3'] + H(+). It carries out the reaction 3',3'-cGAMP + H2O = G[3'-5']pAp[3'] + H(+). Counteracts or regulates the endogenous CBASS antiviral defense system. Phosphodiesterase that enables metal-independent hydrolysis of the host cyclic di- and trinucleotide CBASS signals such as 3'3'-cGAMP, 3'3'cUA, and 3'3'3'-cAAA. The sequence is that of Anti-CBASS protein Acb1 from Caulobacter sp. (strain RHG1).